The chain runs to 328 residues: Fructose-1,6-bisphosphatase class 1 (328 aa).

Mg(2+) is bound by residues Glu-91, Asp-110, Leu-112, and Asp-113. Residues 113 to 116, Asn-205, and 257 to 259 each bind substrate; these read DGSS and YLY. Position 277 (Glu-277) interacts with Mg(2+).

Belongs to the FBPase class 1 family. Homotetramer. The cofactor is Mg(2+).

It is found in the cytoplasm. The enzyme catalyses beta-D-fructose 1,6-bisphosphate + H2O = beta-D-fructose 6-phosphate + phosphate. Its pathway is carbohydrate biosynthesis; gluconeogenesis. The polypeptide is Fructose-1,6-bisphosphatase class 1 (Azorhizobium caulinodans (strain ATCC 43989 / DSM 5975 / JCM 20966 / LMG 6465 / NBRC 14845 / NCIMB 13405 / ORS 571)).